Consider the following 261-residue polypeptide: Acetylglutamate kinase (261 aa).

Substrate-binding positions include 45–46 (GG), arginine 67, and asparagine 162.

Belongs to the acetylglutamate kinase family. ArgB subfamily.

It localises to the cytoplasm. It catalyses the reaction N-acetyl-L-glutamate + ATP = N-acetyl-L-glutamyl 5-phosphate + ADP. It participates in amino-acid biosynthesis; L-arginine biosynthesis; N(2)-acetyl-L-ornithine from L-glutamate: step 2/4. Functionally, catalyzes the ATP-dependent phosphorylation of N-acetyl-L-glutamate. In Bacteroides fragilis (strain ATCC 25285 / DSM 2151 / CCUG 4856 / JCM 11019 / LMG 10263 / NCTC 9343 / Onslow / VPI 2553 / EN-2), this protein is Acetylglutamate kinase.